Reading from the N-terminus, the 177-residue chain is Large ribosomal subunit protein uL6 (177 aa).

It belongs to the universal ribosomal protein uL6 family. As to quaternary structure, part of the 50S ribosomal subunit.

Functionally, this protein binds to the 23S rRNA, and is important in its secondary structure. It is located near the subunit interface in the base of the L7/L12 stalk, and near the tRNA binding site of the peptidyltransferase center. This Acinetobacter baumannii (strain AB307-0294) protein is Large ribosomal subunit protein uL6.